We begin with the raw amino-acid sequence, 298 residues long: N-acetylmuramic acid 6-phosphate etherase (298 aa).

One can recognise an SIS domain in the interval Ile-55–Lys-218. The active-site Proton donor is the Glu-83. Glu-114 is a catalytic residue.

Belongs to the GCKR-like family. MurNAc-6-P etherase subfamily. In terms of assembly, homodimer.

It carries out the reaction N-acetyl-D-muramate 6-phosphate + H2O = N-acetyl-D-glucosamine 6-phosphate + (R)-lactate. The protein operates within amino-sugar metabolism; 1,6-anhydro-N-acetylmuramate degradation. Its pathway is amino-sugar metabolism; N-acetylmuramate degradation. It functions in the pathway cell wall biogenesis; peptidoglycan recycling. Functionally, specifically catalyzes the cleavage of the D-lactyl ether substituent of MurNAc 6-phosphate, producing GlcNAc 6-phosphate and D-lactate. Together with AnmK, is also required for the utilization of anhydro-N-acetylmuramic acid (anhMurNAc) either imported from the medium or derived from its own cell wall murein, and thus plays a role in cell wall recycling. This is N-acetylmuramic acid 6-phosphate etherase from Escherichia fergusonii (strain ATCC 35469 / DSM 13698 / CCUG 18766 / IAM 14443 / JCM 21226 / LMG 7866 / NBRC 102419 / NCTC 12128 / CDC 0568-73).